The following is a 159-amino-acid chain: MNISIISIGKLKEKYLKQGIAEYLKRLSAYAKVEVIELPDEKAPENLSEAEMLIVKEKEGIRILDKISDDTHVIALAIEGKQKSSEEFAISLDRLATYGKSKVAFVIGGSLGLSSEVMKRSNESLSFSKMTLPHQLMRLVLLEQVYRAFRINRGEPYHK.

Residues L76, G108, and 127 to 132 (FSKMTL) each bind S-adenosyl-L-methionine.

Belongs to the RNA methyltransferase RlmH family. Homodimer.

Its subcellular location is the cytoplasm. It carries out the reaction pseudouridine(1915) in 23S rRNA + S-adenosyl-L-methionine = N(3)-methylpseudouridine(1915) in 23S rRNA + S-adenosyl-L-homocysteine + H(+). Its function is as follows. Specifically methylates the pseudouridine at position 1915 (m3Psi1915) in 23S rRNA. The protein is Ribosomal RNA large subunit methyltransferase H of Bacillus cereus (strain ATCC 14579 / DSM 31 / CCUG 7414 / JCM 2152 / NBRC 15305 / NCIMB 9373 / NCTC 2599 / NRRL B-3711).